We begin with the raw amino-acid sequence, 385 residues long: tRNA-specific 2-thiouridylase MnmA (385 aa).

ATP-binding positions include 12 to 19 (GLSGGVDS) and M38. Residues 108–110 (NPD) form an interaction with target base in tRNA region. C113 acts as the Nucleophile in catalysis. Cysteines 113 and 210 form a disulfide. G138 contributes to the ATP binding site. Residues 160–162 (KDQ) are interaction with tRNA. The active-site Cysteine persulfide intermediate is C210.

Belongs to the MnmA/TRMU family.

The protein localises to the cytoplasm. The enzyme catalyses S-sulfanyl-L-cysteinyl-[protein] + uridine(34) in tRNA + AH2 + ATP = 2-thiouridine(34) in tRNA + L-cysteinyl-[protein] + A + AMP + diphosphate + H(+). In terms of biological role, catalyzes the 2-thiolation of uridine at the wobble position (U34) of tRNA, leading to the formation of s(2)U34. In Ureaplasma parvum serovar 3 (strain ATCC 27815 / 27 / NCTC 11736), this protein is tRNA-specific 2-thiouridylase MnmA.